A 474-amino-acid polypeptide reads, in one-letter code: MSKKLLIKTWGCQMNEYDSSKMADLLNAANGYELTEEPEEADVLLLNTCSIREKAQEKVFHQLGRWKTLKDKKPGVVIGVGGCVATQEGDHIRERAPYVDVIFGPQTLHRLPEMIKQSQTDDAPVMDISFPEIEKFDRLPEPRAEGATAFVSIMEGCSKYCTYCVVPYTRGEEVSRPMDDVLFEIAQLAEQGVREVNLLGQNVNAYRGPMHDGEICSFAELLRLVASIDGIDRIRFTTSHPLEFTDDIIAVYEDTPELVSFLHLPVQSGSDRILTMMKRPHTAIEYKSIIRKLRKARPDIQISSDFIVGFPGETDKDFQDTMKLIKDVDFDMSFSFIFSPRPGTPAADYPCDIPEQVKKERLYELQQTINAQAMRYSRLMLATEQRVLVEGPSKKNLMELRARTENNRVVNFEGSADLIGQFVDVKITDVFANSLRGELVRTEKDMDLRSVISPTQMMAKTRREDELGVATFTP.

Positions 3-120 (KKLLIKTWGC…LPEMIKQSQT (118 aa)) constitute an MTTase N-terminal domain. Cys-12, Cys-49, Cys-83, Cys-157, Cys-161, and Cys-164 together coordinate [4Fe-4S] cluster. One can recognise a Radical SAM core domain in the interval 143-375 (RAEGATAFVS…QQTINAQAMR (233 aa)). Residues 378-441 (RLMLATEQRV…ANSLRGELVR (64 aa)) enclose the TRAM domain.

The protein belongs to the methylthiotransferase family. MiaB subfamily. Monomer. [4Fe-4S] cluster serves as cofactor.

Its subcellular location is the cytoplasm. It catalyses the reaction N(6)-dimethylallyladenosine(37) in tRNA + (sulfur carrier)-SH + AH2 + 2 S-adenosyl-L-methionine = 2-methylsulfanyl-N(6)-dimethylallyladenosine(37) in tRNA + (sulfur carrier)-H + 5'-deoxyadenosine + L-methionine + A + S-adenosyl-L-homocysteine + 2 H(+). In terms of biological role, catalyzes the methylthiolation of N6-(dimethylallyl)adenosine (i(6)A), leading to the formation of 2-methylthio-N6-(dimethylallyl)adenosine (ms(2)i(6)A) at position 37 in tRNAs that read codons beginning with uridine. In Vibrio parahaemolyticus serotype O3:K6 (strain RIMD 2210633), this protein is tRNA-2-methylthio-N(6)-dimethylallyladenosine synthase.